Reading from the N-terminus, the 314-residue chain is Small ribosomal subunit protein uS2 (314 aa).

Composition is skewed to basic and acidic residues over residues 244-265 (GGHD…GHKD) and 271-287 (DRRG…EDRA). Residues 244 to 314 (GGHDERREQE…AAPEAAPAKE (71 aa)) are disordered. The segment covering 302–314 (APAAAPEAAPAKE) has biased composition (low complexity).

Belongs to the universal ribosomal protein uS2 family.

The polypeptide is Small ribosomal subunit protein uS2 (Anaeromyxobacter dehalogenans (strain 2CP-C)).